Here is a 456-residue protein sequence, read N- to C-terminus: MSSQIKQVFARQILDSRGNPTIEVEVVLESGAFGRAAVPSGASTGIREALELRDGNKALFLGKSVYKAVENVNTKIAQAVKGLDALDQRLIDKTMIELDGSENKKNLGANAILGVSLATARAAASHLRKPFYRYLMDVKEYLMPVPMMNVINGGSHADNNVDMQEFMIVPAGFDTFSEALRCGTEVFHILKKVLIADGYSVAGVGDEGGYAPDLPSNEAAIEAILKAVKEAGYEPGKHVFIALDPASSEFYKDGKYELKSENKSLTSEEMIDYYAAWVEKYPIVSIEDGLAEEDWAGWKLLTEKLGNKVQLVGDDLFVTNPSILAKGIEKGIANSILIKLNQIGTLTETFEAMAMAGQAGYTCVVSHRSGETSDTIIADLAVATCSGQIKTGSLSRSDRIAKYNQLLRIEEELGENAIYPGIKAFVFNSDEEVEEVVQEIIVEDSEAEKVVVQVEE.

Position 164 (Gln-164) interacts with (2R)-2-phosphoglycerate. The active-site Proton donor is the Glu-207. The Mg(2+) site is built by Asp-244, Glu-287, and Asp-314. Residues Lys-339, Arg-368, Ser-369, and Lys-390 each contribute to the (2R)-2-phosphoglycerate site. Lys-339 (proton acceptor) is an active-site residue.

It belongs to the enolase family. As to quaternary structure, component of the RNA degradosome, a multiprotein complex involved in RNA processing and mRNA degradation. Mg(2+) is required as a cofactor.

The protein resides in the cytoplasm. Its subcellular location is the secreted. It is found in the cell surface. The enzyme catalyses (2R)-2-phosphoglycerate = phosphoenolpyruvate + H2O. It functions in the pathway carbohydrate degradation; glycolysis; pyruvate from D-glyceraldehyde 3-phosphate: step 4/5. Its function is as follows. Catalyzes the reversible conversion of 2-phosphoglycerate (2-PG) into phosphoenolpyruvate (PEP). It is essential for the degradation of carbohydrates via glycolysis. The polypeptide is Enolase (Francisella tularensis subsp. tularensis (strain FSC 198)).